The following is a 380-amino-acid chain: Putative glutamate--cysteine ligase 2-2 (380 aa).

This sequence belongs to the glutamate--cysteine ligase type 2 family. YbdK subfamily.

The enzyme catalyses L-cysteine + L-glutamate + ATP = gamma-L-glutamyl-L-cysteine + ADP + phosphate + H(+). Functionally, ATP-dependent carboxylate-amine ligase which exhibits weak glutamate--cysteine ligase activity. The chain is Putative glutamate--cysteine ligase 2-2 from Nocardia farcinica (strain IFM 10152).